We begin with the raw amino-acid sequence, 105 residues long: MGKLTLLLLALLVWLQYSLWFGKNGLHDYTRVNDDVTAQQATNAKLKARNDQLFAEIDDLNGGQEAIEERARNELSMTRPGETFYRLVPDASKRNQASGQQQNNR.

The Cytoplasmic portion of the chain corresponds to 1 to 3 (MGK). Residues 4–21 (LTLLLLALLVWLQYSLWF) form a helical membrane-spanning segment. The Periplasmic portion of the chain corresponds to 22 to 105 (GKNGLHDYTR…QASGQQQNNR (84 aa)). Positions 33–62 (NDDVTAQQATNAKLKARNDQLFAEIDDLNG) form a coiled coil.

The protein belongs to the FtsB family. Part of a complex composed of FtsB, FtsL and FtsQ.

It is found in the cell inner membrane. Functionally, essential cell division protein. May link together the upstream cell division proteins, which are predominantly cytoplasmic, with the downstream cell division proteins, which are predominantly periplasmic. This is Cell division protein FtsB from Klebsiella aerogenes (Enterobacter aerogenes).